The primary structure comprises 83 residues: Small ribosomal subunit protein uS17 (83 aa).

It belongs to the universal ribosomal protein uS17 family. In terms of assembly, part of the 30S ribosomal subunit.

Functionally, one of the primary rRNA binding proteins, it binds specifically to the 5'-end of 16S ribosomal RNA. This chain is Small ribosomal subunit protein uS17, found in Chlamydia abortus (strain DSM 27085 / S26/3) (Chlamydophila abortus).